The chain runs to 685 residues: Phenoloxidase subunit 1 (685 aa).

3 residues coordinate Cu cation: H209, H213, and H239. Catalysis depends on E351, which acts as the Proton acceptor. Cu cation contacts are provided by H366, H370, and H406. 2 disulfide bridges follow: C580–C622 and C582–C629.

In terms of assembly, heterodimer. Forms a complex with an interleukin 1-like protein as a consequence of a host defense response. The cofactor is Cu(2+). In terms of processing, the N-terminus is blocked. In terms of tissue distribution, synthesized by oenocytoids, a type of hemocyte, and released into the hemolymph plasma.

The protein resides in the secreted. It catalyses the reaction 2 L-dopa + O2 = 2 L-dopaquinone + 2 H2O. The catalysed reaction is L-tyrosine + O2 = L-dopaquinone + H2O. Its activity is regulated as follows. Activated by immulectin and lipopolysaccharide. This is a copper-containing oxidase that functions in the formation of pigments such as melanins and other polyphenolic compounds. Catalyzes the rate-limiting conversions of tyrosine to DOPA, DOPA to DOPA-quinone and possibly 5,6 dihydroxyindole to indole-5'6 quinone. Binds to the surface of hemocytes and is involved in hemocyte melanization. The protein is Phenoloxidase subunit 1 of Manduca sexta (Tobacco hawkmoth).